A 438-amino-acid polypeptide reads, in one-letter code: Protein DJ-1 homolog B (438 aa).

Residues 1–45 (MASSSLCHRYFNKITVTPFFNTKKLHHYSPRRISLRVNRRSFSIS) constitute a chloroplast transit peptide. PfpI endopeptidase domains lie at 53 to 220 (KKVL…EQLL) and 258 to 424 (PQIL…EKFY).

The protein belongs to the peptidase C56 family. In terms of assembly, homodimer.

The protein resides in the plastid. The protein localises to the chloroplast. May be involved in oxidative stress response. The polypeptide is Protein DJ-1 homolog B (DJ1B) (Arabidopsis thaliana (Mouse-ear cress)).